The sequence spans 178 residues: Large ribosomal subunit protein uL6 (178 aa).

The protein belongs to the universal ribosomal protein uL6 family. Part of the 50S ribosomal subunit.

This protein binds to the 23S rRNA, and is important in its secondary structure. It is located near the subunit interface in the base of the L7/L12 stalk, and near the tRNA binding site of the peptidyltransferase center. The protein is Large ribosomal subunit protein uL6 of Buchnera aphidicola subsp. Schizaphis graminum (strain Sg).